The following is a 447-amino-acid chain: Phosphoglucosamine mutase (447 aa).

Ser102 acts as the Phosphoserine intermediate in catalysis. Residues Ser102, Asp241, Asp243, and Asp245 each contribute to the Mg(2+) site. Ser102 carries the post-translational modification Phosphoserine.

This sequence belongs to the phosphohexose mutase family. It depends on Mg(2+) as a cofactor. Post-translationally, activated by phosphorylation.

The enzyme catalyses alpha-D-glucosamine 1-phosphate = D-glucosamine 6-phosphate. Functionally, catalyzes the conversion of glucosamine-6-phosphate to glucosamine-1-phosphate. This is Phosphoglucosamine mutase from Pseudomonas syringae pv. tomato (strain ATCC BAA-871 / DC3000).